A 163-amino-acid polypeptide reads, in one-letter code: MFIPKANRVAIYEYLFKEGVLVAKKDSPIQKHSELDKIPNLQVIKVMQSLNSRGWVKEQFAWRHFYWLLTNEGIEELRRYLHLPPEIVPSTLTQTTRSNAVRPRGGPGGPGGGFGGASKTDDDRSNYRRGPGAYGMDKKGDVGAGTGRVEYRGGFGRASRYDN.

Residues 92–163 are disordered; it reads LTQTTRSNAV…GFGRASRYDN (72 aa). Over residues 105-116 the composition is skewed to gly residues; that stretch reads GGPGGPGGGFGG.

It belongs to the eukaryotic ribosomal protein eS10 family.

The protein localises to the cytoplasm. This chain is Small ribosomal subunit protein eS10A (RpS10a), found in Drosophila melanogaster (Fruit fly).